Here is a 508-residue protein sequence, read N- to C-terminus: Lysine--tRNA ligase (508 aa).

Mg(2+) contacts are provided by E418 and E425.

The protein belongs to the class-II aminoacyl-tRNA synthetase family. As to quaternary structure, homodimer. Mg(2+) serves as cofactor.

The protein resides in the cytoplasm. The catalysed reaction is tRNA(Lys) + L-lysine + ATP = L-lysyl-tRNA(Lys) + AMP + diphosphate. In Burkholderia pseudomallei (strain 668), this protein is Lysine--tRNA ligase.